The primary structure comprises 468 residues: Transcription factor ste11 (468 aa).

Residues 1–21 form a disordered region; the sequence is MSASLTAEQKDQKSSVKRPLN. The segment at residues 16-80 is a DNA-binding region (HMG box); it reads VKRPLNSFML…KHMLENPEYK (65 aa). At Thr173 the chain carries Phosphothreonine. A phosphoserine mark is found at Ser209, Ser211, and Ser218. 2 stretches are compositionally biased toward polar residues: residues 249 to 263 and 274 to 285; these read PSLE…SNCS and GTVSEQSNSDSP. Residues 249–290 form a disordered region; sequence PSLEANLPQNSSNCSARRVPKFDSKGTVSEQSNSDSPELSAD.

Phosphorylation results in inactivation.

The protein resides in the nucleus. The protein localises to the cytoplasm. Functionally, key transcription factor for sexual development. Activates the transcription of the matp, matm, mei2, mfm, ste6 and rgs1 genes. Binds specifically to a DNA fragment carrying a 10-base motif 5'-TTCTTTGTTY-3'. The protein is Transcription factor ste11 (ste11) of Schizosaccharomyces pombe (strain 972 / ATCC 24843) (Fission yeast).